The primary structure comprises 436 residues: Serine protease hepsin (436 aa).

The tract at residues 1 to 29 (MAKEDEEPGAHRGGSTCSRPQPGKGGRTA) is disordered. At 1–38 (MAKEDEEPGAHRGGSTCSRPQPGKGGRTAACCSRPKVA) the chain is on the cytoplasmic side. A helical; Signal-anchor for type II membrane protein membrane pass occupies residues 39–59 (ALIVGTLLFLTGIGAASWAIV). The Extracellular portion of the chain corresponds to 60-436 (TILLQSDQEP…SEASGMVTQP (377 aa)). Residues 73–170 (VQLSPGDSRL…RGRFLTATCQ (98 aa)) enclose the SRCR domain. 8 disulfides stabilise this stretch: C96–C159, C109–C169, C138–C157, C172–C296, C207–C223, C310–C378, C341–C357, and C368–C400. N131 is a glycosylation site (N-linked (GlcNAc...) asparagine). Residues 182–424 (IVGGQDSSLG…FREWIFKAIK (243 aa)) form the Peptidase S1 domain. Residues H222 and D276 each act as charge relay system in the active site. S372 (charge relay system) is an active-site residue.

It belongs to the peptidase S1 family. As to expression, detected in kidney, in thick ascending tubule epithelial cells (at protein level). Detected in kidney and liver.

The protein localises to the apical cell membrane. The protein resides in the cell membrane. It is found in the secreted. The enzyme catalyses Cleavage after basic amino-acid residues, with Arg strongly preferred to Lys.. Functionally, serine protease that cleaves extracellular substrates, and contributes to the proteolytic processing of growth factors, such as HGF and MST1/HGFL. Plays a role in cell growth and maintenance of cell morphology. Plays a role in the proteolytic processing of ACE2. Mediates the proteolytic cleavage of urinary UMOD that is required for UMOD polymerization. This chain is Serine protease hepsin (Hpn), found in Mus musculus (Mouse).